The sequence spans 353 residues: GDP-mannose transporter (353 aa).

Residues Met1–Ser31 lie on the Cytoplasmic side of the membrane. The chain crosses the membrane as a helical span at residues Ile32 to Val52. Topologically, residues Thr53–Asn66 are lumenal. Residues Phe67–Leu87 traverse the membrane as a helical segment. The Cytoplasmic portion of the chain corresponds to Gly88 to Lys102. Residues Trp103 to Gln122 form a helical membrane-spanning segment. The Lumenal portion of the chain corresponds to Tyr123–Ser125. The chain crosses the membrane as a helical span at residues Ile126–Phe148. Over Gly149–Thr154 the chain is Cytoplasmic. A helical membrane pass occupies residues Met155–Tyr172. At Gly173–Leu187 the chain is on the lumenal side. A helical membrane pass occupies residues Leu188–Ile208. Residues Met209 to Asn227 are Cytoplasmic-facing. The chain crosses the membrane as a helical span at residues Asn228–Val248. Residues Asn249–Thr262 are Lumenal-facing. Residue Asn260 is glycosylated (N-linked (GlcNAc...) asparagine). A helical transmembrane segment spans residues Ile263–Cys283. At Val284–Thr290 the chain is on the cytoplasmic side. Residues Thr291–Ala313 traverse the membrane as a helical segment. The Lumenal portion of the chain corresponds to Ala314–Asn316. Residues Phe317–Ala336 traverse the membrane as a helical segment. The Cytoplasmic segment spans residues Lys337–Lys353.

Belongs to the TPT transporter family. SLC35D subfamily. In terms of assembly, homooligomer.

Its subcellular location is the golgi apparatus membrane. It is found in the cytoplasmic vesicle membrane. It localises to the endoplasmic reticulum membrane. In terms of biological role, involved in the import of GDP-mannose from the cytoplasm into the Golgi lumen. The chain is GDP-mannose transporter (VRG4) from Meyerozyma guilliermondii (strain ATCC 6260 / CBS 566 / DSM 6381 / JCM 1539 / NBRC 10279 / NRRL Y-324) (Yeast).